Here is a 301-residue protein sequence, read N- to C-terminus: Acetylglutamate kinase (301 aa).

Substrate-binding positions include 68-69 (GG), Arg90, and Asn195.

Belongs to the acetylglutamate kinase family. ArgB subfamily.

The protein resides in the cytoplasm. The enzyme catalyses N-acetyl-L-glutamate + ATP = N-acetyl-L-glutamyl 5-phosphate + ADP. It functions in the pathway amino-acid biosynthesis; L-arginine biosynthesis; N(2)-acetyl-L-ornithine from L-glutamate: step 2/4. In terms of biological role, catalyzes the ATP-dependent phosphorylation of N-acetyl-L-glutamate. The chain is Acetylglutamate kinase from Pseudomonas putida (strain W619).